Reading from the N-terminus, the 431-residue chain is Enolase (431 aa).

Gln-167 is a binding site for (2R)-2-phosphoglycerate. The active-site Proton donor is Glu-209. 3 residues coordinate Mg(2+): Asp-246, Glu-289, and Asp-316. Residues Lys-341, Arg-370, Ser-371, and Lys-392 each coordinate (2R)-2-phosphoglycerate. Lys-341 functions as the Proton acceptor in the catalytic mechanism.

This sequence belongs to the enolase family. As to quaternary structure, component of the RNA degradosome, a multiprotein complex involved in RNA processing and mRNA degradation. It depends on Mg(2+) as a cofactor.

The protein localises to the cytoplasm. The protein resides in the secreted. Its subcellular location is the cell surface. The enzyme catalyses (2R)-2-phosphoglycerate = phosphoenolpyruvate + H2O. It participates in carbohydrate degradation; glycolysis; pyruvate from D-glyceraldehyde 3-phosphate: step 4/5. Its function is as follows. Catalyzes the reversible conversion of 2-phosphoglycerate (2-PG) into phosphoenolpyruvate (PEP). It is essential for the degradation of carbohydrates via glycolysis. This Shewanella oneidensis (strain ATCC 700550 / JCM 31522 / CIP 106686 / LMG 19005 / NCIMB 14063 / MR-1) protein is Enolase.